The sequence spans 105 residues: Dynein axonemal light chain 4 (105 aa).

It belongs to the dynein light chain family. As to quaternary structure, consists of at least two heavy chains and a number of intermediate and light chains.

The protein localises to the cytoplasm. The protein resides in the cytoskeleton. Its subcellular location is the cilium axoneme. Functionally, force generating protein of respiratory cilia. Produces force towards the minus ends of microtubules. Dynein has ATPase activity. The chain is Dynein axonemal light chain 4 (DNAL4) from Bos taurus (Bovine).